Reading from the N-terminus, the 3423-residue chain is Genome polyprotein (3423 aa).

The interval 1–25 is disordered; sequence MKNPKKKSGGFRIVNMLKRGVARVS. Residues 1–104 are Cytoplasmic-facing; the sequence is MKNPKKKSGG…INARKEKKRR (104 aa). The segment at 37–72 is hydrophobic; homodimerization of capsid protein C; the sequence is LLLGHGPIRMVLAILAFLRFTAIKPSLGLINRWGSV. A propeptide spans 105–122 (ER anchor for capsid protein C, removed in mature form by serine protease NS3); it reads GADTSVGIVGLLLTTAMA. The chain crosses the membrane as a helical span at residues 105 to 125; that stretch reads GADTSVGIVGLLLTTAMAAEV. The Extracellular segment spans residues 126–249; sequence TRRGSAYYMY…YTKHLIRVEN (124 aa). N192 is a glycosylation site (N-linked (GlcNAc...) asparagine; by host). A helical membrane pass occupies residues 250 to 269; it reads WIFRNPGFALAAAAIAWLLG. Topologically, residues 270–274 are cytoplasmic; the sequence is SSTSQ. The helical transmembrane segment at 275–290 threads the bilayer; sequence KVIYLVMILLIAPAYS. Over 291–745 the chain is Extracellular; sequence IRCIGVSNRD…HQIFGAAFKS (455 aa). K328 participates in a covalent cross-link: Glycyl lysine isopeptide (Lys-Gly) (interchain with G-Cter in ubiquitin). Disulfide bonds link C350–C406 and C382–C411. The segment at 388-401 is fusion peptide; the sequence is DRGWGNGCGLFGKG. The N-linked (GlcNAc...) asparagine; by host glycan is linked to N444. Cystine bridges form between C480/C581 and C598/C629. Residue K571 forms a Glycyl lysine isopeptide (Lys-Gly) (interchain with G-Cter in ubiquitin) linkage. A helical membrane pass occupies residues 746-767; the sequence is LFGGMSWFSQILIGTLLMWLGL. Residues 768–773 are Cytoplasmic-facing; the sequence is NTKNGS. The chain crosses the membrane as a helical span at residues 774-794; the sequence is ISLMCLALGGVLIFLSTAVSA. Residues 795–1177 lie on the Lumenal side of the membrane; sequence DVGCSVDFSK…EGLKKRMTTK (383 aa). 6 disulfides stabilise this stretch: C798-C809, C849-C937, C973-C1017, C1074-C1123, C1085-C1106, and C1107-C1110. N924 and N1001 each carry an N-linked (GlcNAc...) asparagine; by host glycan. Residues 1178-1198 form a helical membrane-spanning segment; it reads IIISTSMAVLVAMILGGFSMS. At 1199-1220 the chain is on the cytoplasmic side; sequence DLAKLAILMGATFAEMNTGGDV. A helical transmembrane segment spans residues 1221-1241; the sequence is AHLALIAAFKVRPALLVSFIF. Topologically, residues 1242–1270 are lumenal; the sequence is RANWTPRESMLLALASCLLQTAISALEGD. Residues 1271–1291 form a helical membrane-spanning segment; that stretch reads LMVLINGFALAWLAIRAMVVP. Residues 1292-1295 are Cytoplasmic-facing; the sequence is RTDN. Residues 1296 to 1316 form a helical membrane-spanning segment; that stretch reads ITLAILAALTPLARGTLLVAW. Residues 1317-1345 lie on the Lumenal side of the membrane; it reads RAGLATCGGFMLLSLKGKGSVKKNLPFVM. The chain crosses the membrane as a helical span at residues 1346-1366; the sequence is ALGLTAVRLVDPINVVGLLLL. The Cytoplasmic portion of the chain corresponds to 1367–1373; the sequence is TRSGKRS. A helical membrane pass occupies residues 1374–1394; sequence WPPSEVLTAVGLICALAGGFA. Over 1395–1397 the chain is Lumenal; that stretch reads KAD. A helical transmembrane segment spans residues 1398-1418; sequence IEMAGPMAAVGLLIVSYVVSG. Residues 1419 to 1472 are Cytoplasmic-facing; sequence KSVDMYIERAGDITWEKDAEVTGNSPRLDVALDESGDFSLVEDDGPPMREIILK. The interacts with and activates NS3 protease stretch occupies residues 1425–1464; sequence IERAGDITWEKDAEVTGNSPRLDVALDESGDFSLVEDDGP. The disordered stretch occupies residues 1429 to 1451; that stretch reads GDITWEKDAEVTGNSPRLDVALD. The helical intramembrane region spans 1473–1493; that stretch reads VVLMTICGMNPIAIPFAAGAW. Topologically, residues 1494–2170 are lumenal; it reads YVYVKTGKRS…KAAAAQLPET (677 aa). Residues 1503–1680 enclose the Peptidase S7 domain; sequence SGALWDVPAP…RREEETPVEC (178 aa). Catalysis depends on charge relay system; for serine protease NS3 activity residues H1553, D1577, and S1637. Residues 1683 to 1839 enclose the Helicase ATP-binding domain; sequence PSMLKKKQLT…DSNSPIMDTE (157 aa). The interval 1687–1690 is important for RNA-binding; that stretch reads KKKQ. Residue 1696–1703 coordinates ATP; it reads LHPGAGKT. Positions 1787-1790 match the DEAH box motif; it reads DEAH. The Helicase C-terminal domain occupies 1834-2013; the sequence is PIMDTEVEVP…GLIASLYRPE (180 aa). At K1891 the chain carries N6-acetyllysine; by host. Residues 2171–2191 form a helical membrane-spanning segment; it reads LETIMLLGLLGTVSLGIFFVL. The Lumenal portion of the chain corresponds to 2192-2195; that stretch reads MRNK. Residues 2196-2216 constitute an intramembrane region (helical); sequence GIGKMGFGMVTLGASAWLMWL. The Cytoplasmic segment spans residues 2217–2218; the sequence is SE. The chain crosses the membrane as a helical span at residues 2219–2239; the sequence is IEPARIACVLIVVFLLLVVLI. Residues 2240 to 2254 are Lumenal-facing; that stretch reads PEPEKQRSPQDNQMA. The segment at residues 2255–2269 is an intramembrane region (helical); sequence IIIMVAVGLLGLITA. Residues 2270-2307 are Lumenal-facing; that stretch reads NELGWLERTKSDLSHLMGRREEGATIGFSMDIDLRPAS. The segment at residues 2308–2328 is an intramembrane region (helical); it reads AWAIYAALTTFITPAVQHAVT. The Lumenal portion of the chain corresponds to 2329 to 2344; the sequence is TSYNNYSLMAMATQAG. A helical transmembrane segment spans residues 2345–2365; it reads VLFGMGKGMPFYAWDFGVPLL. Residues 2366 to 2375 are Cytoplasmic-facing; it reads MIGCYSQLTP. Residues 2376 to 2396 form a helical membrane-spanning segment; it reads LTLIVAIILLVAHYMYLIPGL. Residues 2397–2441 lie on the Lumenal side of the membrane; that stretch reads QAAAARAAQKRTAAGIMKNPVVDGIVVTDIDTMTIDPQVEKKMGQ. Residues 2442 to 2462 traverse the membrane as a helical segment; the sequence is VLLIAVAVSSAILSRTAWGWG. Topologically, residues 2463–3423 are cytoplasmic; it reads EAGALITAAT…GEEGSTPGVL (961 aa). Residues 2521–2785 form the mRNA cap 0-1 NS5-type MT domain; it reads GGGTGETLGE…DVNLGSGTRA (265 aa). 2533 to 2539 provides a ligand contact to GTP; the sequence is KARLNQM. S2576 serves as a coordination point for S-adenosyl-L-methionine. A Phosphoserine modification is found at S2576. K2581 acts as the For 2'-O-MTase activity in catalysis. The SUMO-interacting motif (SIM) stretch occupies residues 2597–2600; sequence VIDL. S-adenosyl-L-methionine-binding residues include G2606, W2607, T2624, K2625, H2630, E2631, D2651, V2652, D2666, and I2667. The For 2'-O-MTase activity role is filled by D2666. Residue 2669 to 2675 participates in GTP binding; sequence ESSSSPE. K2702 serves as the catalytic For 2'-O-MTase activity. GTP is bound at residue 2733 to 2735; it reads RNS. E2738 acts as the For 2'-O-MTase activity in catalysis. Residue Y2740 participates in S-adenosyl-L-methionine binding. Positions 2908 to 2914 match the Nuclear localization signal (NLS) motif; it reads KHKRPRV. 4 residues coordinate Zn(2+): E2959, H2963, C2968, and C2971. In terms of domain architecture, RdRp catalytic spans 3049–3199; sequence GRMYADDTAG…KPIDDRFAHA (151 aa). Zn(2+)-binding residues include H3234, C3250, and C3369.

The protein in the N-terminal section; belongs to the class I-like SAM-binding methyltransferase superfamily. mRNA cap 0-1 NS5-type methyltransferase family. Homodimer. Interacts with host SERTAD3; this interaction promotes capsid protein C degradation. Interacts with host CAPRIN1; this interaction is probably linked to the inhibition of stress granules formation by the virus. Interacts with host G3BP1; this interaction is probably linked to the inhibition of stress granules formation by the virus. In terms of assembly, forms heterodimers with envelope protein E in the endoplasmic reticulum and Golgi. Interacts with non-structural protein 2A. As to quaternary structure, homodimer; in the endoplasmic reticulum and Golgi. Interacts with host TYRO3, AXL and DC-SIGN proteins. Interacts with non-structural protein 2A. Interacts with host HAVCR1; this interaction likely mediates virus attachment to host cell. Interacts with host NCAM1. Interacts with host HSPA5. Interacts with Aedes aegypti SRPN25, APY and venom allergen-1 salivary proteins; the interactions do not affect Zika virus replication in human endothelial cells and keratinocytes. Homodimer; Homohexamer when secreted. Interacts with host TBK1. Interacts with host USP8. Interacts with envelope protein E. In terms of assembly, interacts with the structural protein prM/E complex, and the NS2B/NS3 protease complex. As to quaternary structure, forms a heterodimer with serine protease NS3. May form homooligomers. Interacts with human SPCS1. Interacts with non-structural protein 2A. Forms a heterodimer with NS2B. Interacts with NS4B. Interacts with unphosphorylated RNA-directed RNA polymerase NS5; this interaction stimulates RNA-directed RNA polymerase NS5 guanylyltransferase activity. Interacts with non-structural protein 2A. Interacts with host SHFL; this interaction promotes NS3 degradation via a lysosome-dependent pathway. Interacts with host CEP63; this interaction disorganizes the centrosome and inhibits host innate immune response. In terms of assembly, may interact with host ANKLE2; the interaction may cause defects in brain development, such as microcephaly. May interact with host SRPRA and SEC61G. As to quaternary structure, interacts with serine protease NS3. Interacts with NS1. Homodimer; dimerization may negatively regulate the GTase activity, a crucial step in the capping process. Interacts with host STAT2; this interaction inhibits the phosphorylation of the latter, and, when all viral proteins are present (polyprotein), targets STAT2 for degradation. Interacts with host TBK1 and IKBKE; these interactions lead to the inhibition of the host RIG-I signaling pathway. Interacts with host PAF1 complex; the interaction may prevent the recruitment of the host PAF1 complex to interferon-responsive genes, and thus reduces the immune response. Interacts with serine protease NS3. Interacts with host KPNA2. Interacts with host ZSWIM8; this interaction allows STAT2 binding to ZSWIM8 and subsequent proteasomal degradation leading to inhibition of interferon signaling. Specific enzymatic cleavages in vivo yield mature proteins. Cleavages in the lumen of endoplasmic reticulum are performed by host signal peptidase, whereas cleavages in the cytoplasmic side are performed by serine protease NS3. Signal cleavage at the 2K-4B site requires a prior NS3 protease-mediated cleavage at the 4A-2K site. In terms of processing, cleaved in post-Golgi vesicles by a host furin, releasing the mature small envelope protein M, and peptide pr. This cleavage is incomplete as up to 30% of viral particles still carry uncleaved prM. Post-translationally, N-glycosylation plays a role in virulence in mammalian and mosquito hosts, but may have no effect on neurovirulence. Ubiquitination by host TRIM7 promotes virus attachment and fusion of the virus and the host endosome membrane. In terms of processing, N-glycosylated. The excreted form is glycosylated, which is required for efficient secretion of the protein from infected cells. Post-translationally, ubiquitination by host TRIM22 leads to proteasomal degradation. Acetylated by host KAT5. Acetylation modulates NS3 RNA-binding and unwinding activities and plays an important positive role for viral replication. In terms of processing, phosphorylated on serines residues. This phosphorylation may trigger NS5 nuclear localization. Post-translationally, sumoylated, required for regulating IFN induced interferon stimulated genes/ISGs.

The protein localises to the virion. It localises to the host nucleus. The protein resides in the host cytoplasm. Its subcellular location is the host perinuclear region. It is found in the secreted. The protein localises to the virion membrane. It localises to the host endoplasmic reticulum membrane. The catalysed reaction is a 5'-end (5'-triphosphoguanosine)-ribonucleoside in mRNA + S-adenosyl-L-methionine = a 5'-end (N(7)-methyl 5'-triphosphoguanosine)-ribonucleoside in mRNA + S-adenosyl-L-homocysteine. It carries out the reaction a 5'-end (N(7)-methyl 5'-triphosphoguanosine)-ribonucleoside in mRNA + S-adenosyl-L-methionine = a 5'-end (N(7)-methyl 5'-triphosphoguanosine)-(2'-O-methyl-ribonucleoside) in mRNA + S-adenosyl-L-homocysteine + H(+). It catalyses the reaction RNA(n) + a ribonucleoside 5'-triphosphate = RNA(n+1) + diphosphate. The enzyme catalyses Selective hydrolysis of -Xaa-Xaa-|-Yaa- bonds in which each of the Xaa can be either Arg or Lys and Yaa can be either Ser or Ala.. The catalysed reaction is a ribonucleoside 5'-triphosphate + H2O = a ribonucleoside 5'-diphosphate + phosphate + H(+). It carries out the reaction ATP + H2O = ADP + phosphate + H(+). Functionally, plays a role in virus budding by binding to the cell membrane and gathering the viral RNA into a nucleocapsid that forms the core of the mature virus particle. During virus entry, may induce genome penetration into the host cytoplasm after hemifusion induced by the surface proteins. Can migrate to the cell nucleus where it modulates host functions. Inhibits the integrated stress response (ISR) in the infected cell. Inhibits RNA silencing by interfering with host Dicer. Its function is as follows. Prevents premature fusion activity of envelope proteins in trans-Golgi by binding to envelope protein E at pH 6.0. After virion release in extracellular space, gets dissociated from E dimers. In terms of biological role, plays a role in host immune defense modulation and protection of envelope protein E during virion synthesis. PrM-E cleavage is inefficient, many virions are only partially matured and immature prM-E proteins could play a role in immune evasion. Contributes to fetal microcephaly in humans. Acts as a chaperone for envelope protein E during intracellular virion assembly by masking and inactivating envelope protein E fusion peptide. prM is the only viral peptide matured by host furin in the trans-Golgi network probably to avoid catastrophic activation of the viral fusion activity in acidic Golgi compartment prior to virion release. Functionally, may play a role in virus budding. Exerts cytotoxic effects by activating a mitochondrial apoptotic pathway through M ectodomain. May display a viroporin activity. Binds to host cell surface receptors and mediates fusion between viral and cellular membranes. Efficient virus attachment to cell is, at least in part, mediated by host HAVCR1 in a cell-type specific manner. In addition, host NCAM1 can also be used as entry receptor. Interaction with host HSPA5 plays an important role in the early stages of infection as well. Envelope protein is synthesized in the endoplasmic reticulum and forms a heterodimer with protein prM. The heterodimer plays a role in virion budding in the ER, and the newly formed immature particle is covered with 60 spikes composed of heterodimers between precursor prM and envelope protein E. The virion is transported to the Golgi apparatus where the low pH causes the dissociation of PrM-E heterodimers and formation of E homodimers. PrM-E cleavage is inefficient, many virions are only partially matured and immature prM-E proteins could play a role in immune evasion. Its function is as follows. Plays a role in the inhibition of host RLR-induced interferon-beta activation by targeting TANK-binding kinase 1/TBK1. In addition, recruits the host deubiquitinase USP8 to cleave 'Lys-11'-linked polyubiquitin chains from caspase-1/CASP1 thus inhibiting its proteasomal degradation. In turn, stabilized CASP1 promotes cleavage of cGAS, which inhibits its ability to recognize mitochondrial DNA release and initiate type I interferon signaling. In terms of biological role, component of the viral RNA replication complex that recruits genomic RNA, the structural protein prM/E complex, and the NS2B/NS3 protease complex to the virion assembly site and orchestrates virus morphogenesis. Antagonizes also the host MDA5-mediated induction of alpha/beta interferon antiviral response. May disrupt adherens junction formation and thereby impair proliferation of radial cells in the host cortex. Functionally, required cofactor for the serine protease function of NS3. Displays three enzymatic activities: serine protease, NTPase and RNA helicase. NS3 serine protease, in association with NS2B, performs its autocleavage and cleaves the polyprotein at dibasic sites in the cytoplasm: C-prM, NS2A-NS2B, NS2B-NS3, NS3-NS4A, NS4A-2K and NS4B-NS5. NS3 RNA helicase binds RNA and unwinds dsRNA in the 3' to 5' direction. Inhibits the integrated stress response (ISR) in the infected cell by blocking stress granules assembly. Disrupts host centrosome organization in a CEP63-dependent manner to degrade host TBK1 and inhibits innate immune response. Its function is as follows. Regulates the ATPase activity of the NS3 helicase activity. NS4A allows NS3 helicase to conserve energy during unwinding. Cooperatively with NS4B suppresses the Akt-mTOR pathway and leads to cellular dysregulation. By inhibiting host ANKLE2 functions, may cause defects in brain development, such as microcephaly. Also antagonizes the host MDA5-mediated induction of alpha/beta interferon antiviral response. Inhibits the integrated stress response (ISR) in the infected cell by blocking stress granules assembly. In terms of biological role, functions as a signal peptide for NS4B and is required for the interferon antagonism activity of the latter. Functionally, induces the formation of ER-derived membrane vesicles where the viral replication takes place. Also plays a role in the inhibition of host RLR-induced interferon-beta production at TANK-binding kinase 1/TBK1 level. Cooperatively with NS4A suppresses the Akt-mTOR pathway and leads to cellular dysregulation. Replicates the viral (+) and (-) RNA genome, and performs the capping of genomes in the cytoplasm. Methylates viral RNA cap at guanine N-7 and ribose 2'-O positions. Once sufficient NS5 is expressed, binds to the cap-proximal structure and inhibits further translation of the viral genome. Besides its role in RNA genome replication, also prevents the establishment of a cellular antiviral state by blocking the interferon-alpha/beta (IFN-alpha/beta) signaling pathway. Mechanistically, interferes with host kinases TBK1 and IKKE upstream of interferon regulatory factor 3/IRF3 to inhibit the RIG-I pathway. Also antagonizes type I interferon signaling by targeting STAT2 for degradation by the proteasome thereby preventing activation of JAK-STAT signaling pathway. Mechanistically, acts as a scaffold protein to connect host ZSWIM8/CUL3 ligase complex and STAT2, leading to STAT2 degradation. Within the host nucleus, disrupts host SUMO1 and STAT2 co-localization with PML, resulting in PML degradation. May also reduce immune responses by preventing the recruitment of the host PAF1 complex to interferon-responsive genes. This Zika virus (isolate ZIKV/Human/French Polynesia/10087PF/2013) (ZIKV) protein is Genome polyprotein.